The sequence spans 42 residues: Ostricacin-4 (42 aa).

3 cysteine pairs are disulfide-bonded: C8-C36, C15-C30, and C20-C37.

It is found in the secreted. Its function is as follows. Has antibacterial activity against the Gram-positive bacterium S.aureus 1056 MRSA (MIC=11.48 ug/ml) and the Gram-negative bacterium E.coli O157:H7 (MIC=12.03 ug/ml). Does not have antifungal activity against the yeast C.albicans 3153A. This Struthio camelus (Common ostrich) protein is Ostricacin-4.